Reading from the N-terminus, the 234-residue chain is Phosphoribosylaminoimidazole-succinocarboxamide synthase (234 aa).

The protein belongs to the SAICAR synthetase family.

The catalysed reaction is 5-amino-1-(5-phospho-D-ribosyl)imidazole-4-carboxylate + L-aspartate + ATP = (2S)-2-[5-amino-1-(5-phospho-beta-D-ribosyl)imidazole-4-carboxamido]succinate + ADP + phosphate + 2 H(+). The protein operates within purine metabolism; IMP biosynthesis via de novo pathway; 5-amino-1-(5-phospho-D-ribosyl)imidazole-4-carboxamide from 5-amino-1-(5-phospho-D-ribosyl)imidazole-4-carboxylate: step 1/2. In Clostridium botulinum (strain Loch Maree / Type A3), this protein is Phosphoribosylaminoimidazole-succinocarboxamide synthase.